Reading from the N-terminus, the 76-residue chain is UPF0154 protein Exig_1099 (76 aa).

The chain crosses the membrane as a helical span at residues 4 to 24 (WIWILIALLCLVAGVALGFYI). Residues 54-76 (KPSQKKVNQVMRSMSGSMKSPKK) form a disordered region.

It belongs to the UPF0154 family.

It localises to the cell membrane. The protein is UPF0154 protein Exig_1099 of Exiguobacterium sibiricum (strain DSM 17290 / CCUG 55495 / CIP 109462 / JCM 13490 / 255-15).